The chain runs to 205 residues: GTP cyclohydrolase 1 (205 aa).

Zn(2+) is bound by residues Cys-94, His-97, and Cys-165.

It belongs to the GTP cyclohydrolase I family. In terms of assembly, toroid-shaped homodecamer, composed of two pentamers of five dimers.

The catalysed reaction is GTP + H2O = 7,8-dihydroneopterin 3'-triphosphate + formate + H(+). It participates in cofactor biosynthesis; 7,8-dihydroneopterin triphosphate biosynthesis; 7,8-dihydroneopterin triphosphate from GTP: step 1/1. This is GTP cyclohydrolase 1 from Sinorhizobium medicae (strain WSM419) (Ensifer medicae).